Consider the following 570-residue polypeptide: Proline--tRNA ligase (570 aa).

Belongs to the class-II aminoacyl-tRNA synthetase family. ProS type 1 subfamily. As to quaternary structure, homodimer.

It localises to the cytoplasm. It carries out the reaction tRNA(Pro) + L-proline + ATP = L-prolyl-tRNA(Pro) + AMP + diphosphate. Catalyzes the attachment of proline to tRNA(Pro) in a two-step reaction: proline is first activated by ATP to form Pro-AMP and then transferred to the acceptor end of tRNA(Pro). As ProRS can inadvertently accommodate and process non-cognate amino acids such as alanine and cysteine, to avoid such errors it has two additional distinct editing activities against alanine. One activity is designated as 'pretransfer' editing and involves the tRNA(Pro)-independent hydrolysis of activated Ala-AMP. The other activity is designated 'posttransfer' editing and involves deacylation of mischarged Ala-tRNA(Pro). The misacylated Cys-tRNA(Pro) is not edited by ProRS. The polypeptide is Proline--tRNA ligase (Desulfotalea psychrophila (strain LSv54 / DSM 12343)).